A 265-amino-acid polypeptide reads, in one-letter code: Deoxycytidine kinase 2 (265 aa).

31–39 (GNIAAGKST) lines the ATP pocket. Substrate is bound by residues Glu-56, Tyr-89, and Gln-100. Catalysis depends on Glu-130, which acts as the Proton acceptor. Substrate is bound by residues Arg-131 and Asp-136. 191–195 (RLQKR) serves as a coordination point for ATP. Substrate is bound at residue Glu-200. 243–245 (EDF) provides a ligand contact to ATP.

It belongs to the DCK/DGK family. Homodimer. Expressed at high levels in adult intestine, spleen, thymus and testis with lower levels in skeletal muscle and eye. In the embryo, expressed at higher levels until day 10 with lower levels in later stages.

The protein resides in the nucleus. The enzyme catalyses 2'-deoxycytidine + a ribonucleoside 5'-triphosphate = dCMP + a ribonucleoside 5'-diphosphate + H(+). It catalyses the reaction 2'-deoxyguanosine + ATP = dGMP + ADP + H(+). The catalysed reaction is 2'-deoxyadenosine + ATP = dAMP + ADP + H(+). Its function is as follows. Phosphorylates the deoxyribonucleosides deoxyadenosine, deoxycytidine and deoxyguanosine. Shows highest activity against deoxyguanosine followed by deoxycytidine and then deoxyadenosine. Shows only very minor activity against deoxyuridine and deoxythymidine. The chain is Deoxycytidine kinase 2 from Gallus gallus (Chicken).